A 97-amino-acid chain; its full sequence is Defensin alpha 4 (97 aa).

A signal peptide spans 1–19 (MRIIAILAAILLVALQVRA). Positions 20-63 (GPLQARGDEAPGQEQRGPEDQDISISFAWDKSSALQVSGSTRGM) are excised as a propeptide. 3 cysteine pairs are disulfide-bonded: Cys65–Cys93, Cys67–Cys82, and Cys72–Cys92. Asp97 is a propeptide.

It belongs to the alpha-defensin family. As to quaternary structure, homodimer; homodimerization seems to be required for killing S.aureus, but not E.coli. Interacts with CD4. Interacts with Bacillus anthracis lef; homodimerization is required for the interaction. In terms of processing, the three-dimensional structure formed by the three intramolecular disulfide bridges is indispensable for effective bacterial killing.

It localises to the secreted. It is found in the cytoplasmic vesicle. The protein resides in the secretory vesicle. In terms of biological role, host-defense peptide that has antimicrobial activity against Gram-negative bacteria, and to a lesser extent also against Gram-positive bacteria and fungi. Exhibits antimicrobial activity against Gram-negative E.coli and E.aerogenes and Gram-positive S.faecalis, S.aureus and B.cereus and the yeast C.albicans (in vitro). Inhibits corticotropin (ACTH)-stimulated corticosterone production (in vitro). Inhibits enzymatic activity of B.anthracis lef/anthrax lethal factor (in vitro). This is Defensin alpha 4 (DEFA4) from Pan troglodytes (Chimpanzee).